A 111-amino-acid chain; its full sequence is Large ribosomal subunit protein uL22 (111 aa).

It belongs to the universal ribosomal protein uL22 family. As to quaternary structure, part of the 50S ribosomal subunit.

Functionally, this protein binds specifically to 23S rRNA; its binding is stimulated by other ribosomal proteins, e.g. L4, L17, and L20. It is important during the early stages of 50S assembly. It makes multiple contacts with different domains of the 23S rRNA in the assembled 50S subunit and ribosome. In terms of biological role, the globular domain of the protein is located near the polypeptide exit tunnel on the outside of the subunit, while an extended beta-hairpin is found that lines the wall of the exit tunnel in the center of the 70S ribosome. In Citrifermentans bemidjiense (strain ATCC BAA-1014 / DSM 16622 / JCM 12645 / Bem) (Geobacter bemidjiensis), this protein is Large ribosomal subunit protein uL22.